Here is a 391-residue protein sequence, read N- to C-terminus: 4-hydroxy-3-methylbut-2-en-1-yl diphosphate synthase (flavodoxin) (391 aa).

Residues C281, C284, C316, and E323 each coordinate [4Fe-4S] cluster. A disordered region spans residues 372-391 (EMGGEDGQGGIKGSPVVSVS).

This sequence belongs to the IspG family. The cofactor is [4Fe-4S] cluster.

It carries out the reaction (2E)-4-hydroxy-3-methylbut-2-enyl diphosphate + oxidized [flavodoxin] + H2O + 2 H(+) = 2-C-methyl-D-erythritol 2,4-cyclic diphosphate + reduced [flavodoxin]. It functions in the pathway isoprenoid biosynthesis; isopentenyl diphosphate biosynthesis via DXP pathway; isopentenyl diphosphate from 1-deoxy-D-xylulose 5-phosphate: step 5/6. Converts 2C-methyl-D-erythritol 2,4-cyclodiphosphate (ME-2,4cPP) into 1-hydroxy-2-methyl-2-(E)-butenyl 4-diphosphate. This chain is 4-hydroxy-3-methylbut-2-en-1-yl diphosphate synthase (flavodoxin), found in Renibacterium salmoninarum (strain ATCC 33209 / DSM 20767 / JCM 11484 / NBRC 15589 / NCIMB 2235).